Reading from the N-terminus, the 170-residue chain is uncharacterized protein (170 aa).

Over 1–15 the chain is Cytoplasmic; it reads MFLTSPFESCIVLSS. The helical transmembrane segment at 16–36 threads the bilayer; that stretch reads LIAGLLFSLSTGFVGILGVFA. Residues 37-76 are Extracellular-facing; it reads SLFETELSVSPKRLSLSSLSWPKTFWALLSSVEGVSWESS. A helical transmembrane segment spans residues 77-97; it reads LFACIVGCCFAVTVIASLSAS. The Cytoplasmic segment spans residues 98–119; that stretch reads RVFGTVASSFRDSSCCCDSSPA. The chain crosses the membrane as a helical span at residues 120–140; it reads VSVLATPATAALALLSLLLSL. Residues 141–170 lie on the Extracellular side of the membrane; that stretch reads PCWSTSTEAFTVDPSPSVFSMLANRITIGL.

It is found in the membrane. This is an uncharacterized protein from Saccharomyces cerevisiae (strain ATCC 204508 / S288c) (Baker's yeast).